The following is a 215-amino-acid chain: Putative lipoprotein NMB1124/NMB1162 (215 aa).

Residues 1–16 (MKPLILGLAAVLALSA) form the signal peptide. C17 is lipidated: N-palmitoyl cysteine. A lipid anchor (S-diacylglycerol cysteine) is attached at C17.

The protein localises to the cell membrane. The sequence is that of Putative lipoprotein NMB1124/NMB1162 from Neisseria meningitidis serogroup B (strain ATCC BAA-335 / MC58).